A 116-amino-acid chain; its full sequence is Iron-sulfur cluster assembly protein CyaY (116 aa).

It belongs to the frataxin family.

Functionally, involved in iron-sulfur (Fe-S) cluster assembly. May act as a regulator of Fe-S biogenesis. The chain is Iron-sulfur cluster assembly protein CyaY from Buchnera aphidicola subsp. Acyrthosiphon pisum (strain APS) (Acyrthosiphon pisum symbiotic bacterium).